Consider the following 154-residue polypeptide: Ribonuclease H (154 aa).

In terms of domain architecture, RNase H type-1 spans 1 to 142 (MLKQVEIFTD…CDELARRAAG (142 aa)). Mg(2+) is bound by residues D10, E48, D70, and D134.

Belongs to the RNase H family. As to quaternary structure, monomer. Mg(2+) serves as cofactor.

Its subcellular location is the cytoplasm. It catalyses the reaction Endonucleolytic cleavage to 5'-phosphomonoester.. In terms of biological role, endonuclease that specifically degrades the RNA of RNA-DNA hybrids. The sequence is that of Ribonuclease H from Edwardsiella ictaluri (strain 93-146).